We begin with the raw amino-acid sequence, 370 residues long: Chaperone protein DnaJ (370 aa).

A J domain is found at 5 to 70 (DYYEVLGVSK…EKRSMYDRMG (66 aa)). The segment at 134 to 212 (GVKKTITFTA…CHGSGVADRQ (79 aa)) adopts a CR-type zinc-finger fold. The Zn(2+) site is built by Cys-147, Cys-150, Cys-164, Cys-167, Cys-186, Cys-189, Cys-200, and Cys-203. 4 CXXCXGXG motif repeats span residues 147–154 (CDVCDGKG), 164–171 (CKTCHGSG), 186–193 (CGTCRGQG), and 200–207 (CHACHGSG). The segment at 351–370 (DGEDSASSPKKKSFFDRLFD) is disordered.

Belongs to the DnaJ family. In terms of assembly, homodimer. It depends on Zn(2+) as a cofactor.

The protein resides in the cytoplasm. In terms of biological role, participates actively in the response to hyperosmotic and heat shock by preventing the aggregation of stress-denatured proteins and by disaggregating proteins, also in an autonomous, DnaK-independent fashion. Unfolded proteins bind initially to DnaJ; upon interaction with the DnaJ-bound protein, DnaK hydrolyzes its bound ATP, resulting in the formation of a stable complex. GrpE releases ADP from DnaK; ATP binding to DnaK triggers the release of the substrate protein, thus completing the reaction cycle. Several rounds of ATP-dependent interactions between DnaJ, DnaK and GrpE are required for fully efficient folding. Also involved, together with DnaK and GrpE, in the DNA replication of plasmids through activation of initiation proteins. The polypeptide is Chaperone protein DnaJ (Acinetobacter baumannii (strain AB0057)).